Reading from the N-terminus, the 178-residue chain is Adenine phosphoribosyltransferase (178 aa).

Belongs to the purine/pyrimidine phosphoribosyltransferase family. Homodimer.

It is found in the cytoplasm. It catalyses the reaction AMP + diphosphate = 5-phospho-alpha-D-ribose 1-diphosphate + adenine. It functions in the pathway purine metabolism; AMP biosynthesis via salvage pathway; AMP from adenine: step 1/1. Its function is as follows. Catalyzes a salvage reaction resulting in the formation of AMP, that is energically less costly than de novo synthesis. In Erythrobacter litoralis (strain HTCC2594), this protein is Adenine phosphoribosyltransferase.